The sequence spans 425 residues: Glutamyl-tRNA reductase (425 aa).

Residues 47 to 50 (TCNR), serine 107, 112 to 114 (EDQ), and glutamine 118 contribute to the substrate site. Cysteine 48 functions as the Nucleophile in the catalytic mechanism. 187–192 (GAGHMA) contributes to the NADP(+) binding site.

This sequence belongs to the glutamyl-tRNA reductase family. In terms of assembly, homodimer.

It carries out the reaction (S)-4-amino-5-oxopentanoate + tRNA(Glu) + NADP(+) = L-glutamyl-tRNA(Glu) + NADPH + H(+). The protein operates within porphyrin-containing compound metabolism; protoporphyrin-IX biosynthesis; 5-aminolevulinate from L-glutamyl-tRNA(Glu): step 1/2. It functions in the pathway porphyrin-containing compound metabolism; chlorophyll biosynthesis. Catalyzes the NADPH-dependent reduction of glutamyl-tRNA(Glu) to glutamate 1-semialdehyde (GSA). The polypeptide is Glutamyl-tRNA reductase (Roseiflexus castenholzii (strain DSM 13941 / HLO8)).